The primary structure comprises 459 residues: Bifunctional protein GlmU (459 aa).

The interval 1–228 (MNFKAIILAA…IEELMGVNSR (228 aa)) is pyrophosphorylase. UDP-N-acetyl-alpha-D-glucosamine contacts are provided by residues 8-11 (LAAG), lysine 22, glutamine 72, and 77-78 (GT). Aspartate 101 is a Mg(2+) binding site. Residues glycine 138, glutamate 153, asparagine 168, and asparagine 226 each coordinate UDP-N-acetyl-alpha-D-glucosamine. Asparagine 226 lines the Mg(2+) pocket. A linker region spans residues 229 to 249 (VELSKAEEIMRRRINESHMVN). The N-acetyltransferase stretch occupies residues 250 to 459 (GVTIIDTNST…KKNQKDDQSK (210 aa)). UDP-N-acetyl-alpha-D-glucosamine-binding residues include arginine 331 and lysine 349. The Proton acceptor role is filled by histidine 361. UDP-N-acetyl-alpha-D-glucosamine contacts are provided by tyrosine 364 and asparagine 375. Residues 384–385 (NY), serine 403, threonine 421, and arginine 438 contribute to the acetyl-CoA site.

It in the N-terminal section; belongs to the N-acetylglucosamine-1-phosphate uridyltransferase family. The protein in the C-terminal section; belongs to the transferase hexapeptide repeat family. As to quaternary structure, homotrimer. Mg(2+) serves as cofactor.

It is found in the cytoplasm. The catalysed reaction is alpha-D-glucosamine 1-phosphate + acetyl-CoA = N-acetyl-alpha-D-glucosamine 1-phosphate + CoA + H(+). The enzyme catalyses N-acetyl-alpha-D-glucosamine 1-phosphate + UTP + H(+) = UDP-N-acetyl-alpha-D-glucosamine + diphosphate. It participates in nucleotide-sugar biosynthesis; UDP-N-acetyl-alpha-D-glucosamine biosynthesis; N-acetyl-alpha-D-glucosamine 1-phosphate from alpha-D-glucosamine 6-phosphate (route II): step 2/2. The protein operates within nucleotide-sugar biosynthesis; UDP-N-acetyl-alpha-D-glucosamine biosynthesis; UDP-N-acetyl-alpha-D-glucosamine from N-acetyl-alpha-D-glucosamine 1-phosphate: step 1/1. Its pathway is bacterial outer membrane biogenesis; LPS lipid A biosynthesis. Its function is as follows. Catalyzes the last two sequential reactions in the de novo biosynthetic pathway for UDP-N-acetylglucosamine (UDP-GlcNAc). The C-terminal domain catalyzes the transfer of acetyl group from acetyl coenzyme A to glucosamine-1-phosphate (GlcN-1-P) to produce N-acetylglucosamine-1-phosphate (GlcNAc-1-P), which is converted into UDP-GlcNAc by the transfer of uridine 5-monophosphate (from uridine 5-triphosphate), a reaction catalyzed by the N-terminal domain. The sequence is that of Bifunctional protein GlmU from Clostridioides difficile (strain 630) (Peptoclostridium difficile).